Here is a 213-residue protein sequence, read N- to C-terminus: mRNA-decapping protein OPG121 (213 aa).

Residues glutamate 16 and arginine 50 each coordinate N(7)-methyl-GTP. The region spanning 30-209 (KDTHVFAACI…EYLSYIYNML (180 aa)) is the Nudix hydrolase domain. Positions 111–132 (GKLDKKESIKDCLRRELKEESD) match the Nudix box motif. Positions 117, 126, 130, 151, and 183 each coordinate Mg(2+). Catalysis depends on glutamate 126, which acts as the Nucleophile. Aspartate 151 is a N(7)-methyl-GTP binding site.

Belongs to the Nudix hydrolase family. The cofactor is Mg(2+). It depends on Mn(2+) as a cofactor.

It carries out the reaction a 5'-end (N(7)-methyl 5'-triphosphoguanosine)-guanosine in mRNA + H2O = a 5'-end phospho-guanosine in mRNA + N(7)-methyl-GDP + 2 H(+). Functionally, decapping enzyme that remove the protective 5'-cap from both host and viral mRNAs to commit transcripts for decay by the cellular exonuclease XRN1. Accelerates viral and cellular mRNA turnover to eliminate competing host mRNAs and allow stage-specific synthesis of viral proteins. Acceleration of the turnover of cellular transcripts may even promote the shutoff of host protein synthesis. This Homo sapiens (Human) protein is mRNA-decapping protein OPG121 (OPG121).